A 335-amino-acid chain; its full sequence is Ketol-acid reductoisomerase (NADP(+)) (335 aa).

One can recognise a KARI N-terminal Rossmann domain in the interval 5 to 185 (SKIYTDKDSN…GATRAGVIPT (181 aa)). NADP(+) contacts are provided by residues 28 to 31 (YGSQ), serine 56, and 86 to 89 (DMVQ). Histidine 111 is an active-site residue. Glycine 137 lines the NADP(+) pocket. Residues 186–331 (TFKEETETDL…NQLKDLIQKG (146 aa)) enclose the KARI C-terminal knotted domain. Residues aspartate 194, glutamate 198, glutamate 230, and glutamate 234 each coordinate Mg(2+). Position 255 (serine 255) interacts with substrate.

It belongs to the ketol-acid reductoisomerase family. Mg(2+) is required as a cofactor.

The catalysed reaction is (2R)-2,3-dihydroxy-3-methylbutanoate + NADP(+) = (2S)-2-acetolactate + NADPH + H(+). It catalyses the reaction (2R,3R)-2,3-dihydroxy-3-methylpentanoate + NADP(+) = (S)-2-ethyl-2-hydroxy-3-oxobutanoate + NADPH + H(+). It participates in amino-acid biosynthesis; L-isoleucine biosynthesis; L-isoleucine from 2-oxobutanoate: step 2/4. The protein operates within amino-acid biosynthesis; L-valine biosynthesis; L-valine from pyruvate: step 2/4. Its function is as follows. Involved in the biosynthesis of branched-chain amino acids (BCAA). Catalyzes an alkyl-migration followed by a ketol-acid reduction of (S)-2-acetolactate (S2AL) to yield (R)-2,3-dihydroxy-isovalerate. In the isomerase reaction, S2AL is rearranged via a Mg-dependent methyl migration to produce 3-hydroxy-3-methyl-2-ketobutyrate (HMKB). In the reductase reaction, this 2-ketoacid undergoes a metal-dependent reduction by NADPH to yield (R)-2,3-dihydroxy-isovalerate. This Saccharolobus islandicus (strain M.16.27) (Sulfolobus islandicus) protein is Ketol-acid reductoisomerase (NADP(+)).